Consider the following 433-residue polypeptide: 3-phosphoshikimate 1-carboxyvinyltransferase (433 aa).

3 residues coordinate 3-phosphoshikimate: K22, S23, and R27. A phosphoenolpyruvate-binding site is contributed by K22. The phosphoenolpyruvate site is built by G95 and R123. 3-phosphoshikimate is bound by residues S167, Q169, D315, and K342. Q169 serves as a coordination point for phosphoenolpyruvate. Catalysis depends on D315, which acts as the Proton acceptor. 2 residues coordinate phosphoenolpyruvate: R346 and R387.

Belongs to the EPSP synthase family. As to quaternary structure, monomer.

It localises to the cytoplasm. It carries out the reaction 3-phosphoshikimate + phosphoenolpyruvate = 5-O-(1-carboxyvinyl)-3-phosphoshikimate + phosphate. It functions in the pathway metabolic intermediate biosynthesis; chorismate biosynthesis; chorismate from D-erythrose 4-phosphate and phosphoenolpyruvate: step 6/7. In terms of biological role, catalyzes the transfer of the enolpyruvyl moiety of phosphoenolpyruvate (PEP) to the 5-hydroxyl of shikimate-3-phosphate (S3P) to produce enolpyruvyl shikimate-3-phosphate and inorganic phosphate. The chain is 3-phosphoshikimate 1-carboxyvinyltransferase from Legionella pneumophila subsp. pneumophila (strain Philadelphia 1 / ATCC 33152 / DSM 7513).